The sequence spans 493 residues: MQQHHLQQQQQQQQQQEQQHLQEQQQHLQQLHHHAHHHLPQPLHTTSHHHSAHPHLQQQQQQQQHAVVASSPSSVLQQQQQQSTPTTHSTPTHAVMYEDPPPVPLVAVQQQHLPAPQQQQQLQQQQQQQQQQLATTPVAGALSPAQTPTGPSAQQQQHLTSPHHQQLPQQQTPNSVASGASSNLQQQQQQQNAAVAPGQTQIVAPTTASVSPSSVSSQKEDINMSIQLAPLHIPAIRAGPGFETDTSAAVKRHTAHWAYNDEGFNQHYGSGYYDRKHMFAYPYPETQFPVGQYWGPNYRPDQTTSAAAAAAYMNEAERHVSAAARQSVEGTSTSSYEPPTYSSPGGLRGYPSENYSSSGASGGLSVGAVGPCTPNPGLHEWTGQVSVRKKRKPYSKFQTLELEKEFLFNAYVSKQKRWELARNLQLTERQVKIWFQNRRMKNKKNSQRQANQQNNNNNSSSNHNHAQATQQHHSGHHLNLSLNMGHHAAKMHQ.

Over residues 1–29 the composition is skewed to low complexity; the sequence is MQQHHLQQQQQQQQQQEQQHLQEQQQHLQ. 3 disordered regions span residues 1 to 199, 322 to 360, and 438 to 475; these read MQQH…APGQ, AAAR…SSGA, and RRMK…HHSG. A compositionally biased stretch (basic residues) spans 30-39; that stretch reads QLHHHAHHHL. Composition is skewed to low complexity over residues 54-95 and 105-134; these read PHLQ…THAV and LVAV…QQLA. A compositionally biased stretch (polar residues) spans 144-153; it reads PAQTPTGPSA. Residues 154–173 show a composition bias toward low complexity; sequence QQQQHLTSPHHQQLPQQQTP. The segment covering 174-184 has biased composition (polar residues); the sequence is NSVASGASSNL. Residues 329-345 are compositionally biased toward low complexity; sequence EGTSTSSYEPPTYSSPG. Residues 387–446 constitute a DNA-binding region (homeobox); the sequence is VRKKRKPYSKFQTLELEKEFLFNAYVSKQKRWELARNLQLTERQVKIWFQNRRMKNKKNS. Low complexity predominate over residues 447-475; sequence QRQANQQNNNNNSSSNHNHAQATQQHHSG.

This sequence belongs to the Abd-B homeobox family. In terms of tissue distribution, isoform M and isoform R are expressed in ectodermal and mesodermal tissues and central nervous system of fourth to ninth embryonic abdominal segments. Later in embryogenesis, expression is seen in visceral mesoderm surrounding hindgut and in two Malpighian tubules.

It localises to the nucleus. Functionally, sequence-specific transcription factor which is part of a developmental regulatory system that provides cells with specific positional identities on the anterior-posterior axis. This is Homeobox protein abdominal-B (Abd-B) from Drosophila melanogaster (Fruit fly).